Here is a 61-residue protein sequence, read N- to C-terminus: Small ribosomal subunit protein uS14 (61 aa).

Zn(2+)-binding residues include cysteine 24, cysteine 27, cysteine 40, and cysteine 43.

Belongs to the universal ribosomal protein uS14 family. Zinc-binding uS14 subfamily. Part of the 30S ribosomal subunit. Contacts proteins S3 and S10. Zn(2+) is required as a cofactor.

Its function is as follows. Binds 16S rRNA, required for the assembly of 30S particles and may also be responsible for determining the conformation of the 16S rRNA at the A site. The sequence is that of Small ribosomal subunit protein uS14 from Mesomycoplasma hyopneumoniae (strain 232) (Mycoplasma hyopneumoniae).